The chain runs to 165 residues: NADH-quinone oxidoreductase subunit I (165 aa).

4Fe-4S ferredoxin-type domains lie at 57–86 (RRYD…IESE) and 96–125 (SRYD…ETHI). 8 residues coordinate [4Fe-4S] cluster: cysteine 66, cysteine 69, cysteine 72, cysteine 76, cysteine 105, cysteine 108, cysteine 111, and cysteine 115.

The protein belongs to the complex I 23 kDa subunit family. As to quaternary structure, NDH-1 is composed of 14 different subunits. Subunits NuoA, H, J, K, L, M, N constitute the membrane sector of the complex. [4Fe-4S] cluster is required as a cofactor.

It is found in the cell inner membrane. It catalyses the reaction a quinone + NADH + 5 H(+)(in) = a quinol + NAD(+) + 4 H(+)(out). In terms of biological role, NDH-1 shuttles electrons from NADH, via FMN and iron-sulfur (Fe-S) centers, to quinones in the respiratory chain. The immediate electron acceptor for the enzyme in this species is believed to be ubiquinone. Couples the redox reaction to proton translocation (for every two electrons transferred, four hydrogen ions are translocated across the cytoplasmic membrane), and thus conserves the redox energy in a proton gradient. The sequence is that of NADH-quinone oxidoreductase subunit I from Polaromonas sp. (strain JS666 / ATCC BAA-500).